The sequence spans 249 residues: Ribosomal RNA small subunit methyltransferase J (249 aa).

S-adenosyl-L-methionine contacts are provided by residues 97–98 (RD), 113–114 (ER), and Asp-167.

The protein belongs to the methyltransferase superfamily. RsmJ family.

It is found in the cytoplasm. The catalysed reaction is guanosine(1516) in 16S rRNA + S-adenosyl-L-methionine = N(2)-methylguanosine(1516) in 16S rRNA + S-adenosyl-L-homocysteine + H(+). Functionally, specifically methylates the guanosine in position 1516 of 16S rRNA. In Aeromonas salmonicida (strain A449), this protein is Ribosomal RNA small subunit methyltransferase J.